We begin with the raw amino-acid sequence, 394 residues long: Tyrosine--tRNA ligase, cytoplasmic (394 aa).

Residue Ser-2 is modified to N-acetylserine. Tyr-43 serves as a coordination point for L-tyrosine. A 'HIGH' region motif is present at residues Pro-48–Tyr-56. 4 residues coordinate L-tyrosine: Tyr-170, Gln-174, Asp-177, and Gln-192. A 'KMSKS' region motif is present at residues Lys-227–Ser-231. A Phosphoserine modification is found at Ser-235. A disordered region spans residues Gln-348–Leu-394. Thr-359 carries the phosphothreonine modification. Residues Pro-360–Gly-378 carry the Nuclear localization signal motif. A compositionally biased stretch (basic residues) spans Lys-362–Gly-373.

The protein belongs to the class-I aminoacyl-tRNA synthetase family. Homodimer. Interacts with KNR4/SMI1.

It is found in the cytoplasm. Its subcellular location is the nucleus. It catalyses the reaction tRNA(Tyr) + L-tyrosine + ATP = L-tyrosyl-tRNA(Tyr) + AMP + diphosphate + H(+). Inhibited by N-ethylmaleimide and p-chloromercuribenzoate. Its function is as follows. Catalyzes the attachment of L-tyrosine to tRNA(Tyr) in a two-step reaction: L-tyrosine is first activated by ATP to form Tyr-AMP and then transferred to the acceptor end of tRNA(Tyr). The specificity determinants on tRNA(Tyr) are the base pair C1-G72, the discriminator residue A73, and the three anticodon bases G34, U35 and A36. Also involved in nuclear tRNA export. Also attaches D-Tyr to tRNA(Tyr), this reaction is about 150-fold less efficient than attachment of L-Tyr. The sequence is that of Tyrosine--tRNA ligase, cytoplasmic from Saccharomyces cerevisiae (strain ATCC 204508 / S288c) (Baker's yeast).